The following is a 164-amino-acid chain: UPF0304 protein Ent638_2838 (164 aa).

It belongs to the UPF0304 family.

The polypeptide is UPF0304 protein Ent638_2838 (Enterobacter sp. (strain 638)).